The following is a 5193-amino-acid chain: Usherin (5193 aa).

A signal peptide spans 1–34 (MHYLALSPGFLCYTIKTLILAYLASVLVLAASQG). The Extracellular portion of the chain corresponds to 35 to 5033 (VFPRLENVGA…KSTEFYSELW (4999 aa)). Asparagine 230, asparagine 258, asparagine 274, asparagine 358, asparagine 415, asparagine 448, and asparagine 469 each carry an N-linked (GlcNAc...) asparagine glycan. One can recognise a Laminin N-terminal domain in the interval 268 to 514 (QDFRLYNVSL…AVDEIIVSGR (247 aa)). Intrachain disulfides connect cysteine 515–cysteine 524, cysteine 517–cysteine 533, cysteine 535–cysteine 546, cysteine 549–cysteine 569, cysteine 572–cysteine 581, cysteine 574–cysteine 602, cysteine 605–cysteine 614, cysteine 617–cysteine 635, cysteine 638–cysteine 652, cysteine 640–cysteine 659, cysteine 661–cysteine 670, cysteine 673–cysteine 688, cysteine 691–cysteine 705, cysteine 693–cysteine 712, cysteine 714–cysteine 723, cysteine 726–cysteine 741, cysteine 744–cysteine 756, cysteine 746–cysteine 763, cysteine 765–cysteine 774, cysteine 777–cysteine 789, cysteine 792–cysteine 805, cysteine 794–cysteine 812, cysteine 814–cysteine 823, and cysteine 826–cysteine 846. Laminin EGF-like domains lie at 515–571 (CQCH…NCKP), 572–637 (CQCH…ACKL), 638–690 (CDCN…GCRP), 691–743 (CNCN…GCEP), 744–791 (CQCN…ACEV), 792–848 (CDCS…NCEK), 853–896 (NGSL…GCQA), 897–947 (CDCD…GCLP), 948–998 (CLCH…RCRP), and 999–1049 (CHCH…GCSK). N-linked (GlcNAc...) asparagine glycosylation is present at asparagine 647. N-linked (GlcNAc...) asparagine glycosylation is found at asparagine 836 and asparagine 853. Cystine bridges form between cysteine 867-cysteine 876, cysteine 879-cysteine 894, cysteine 897-cysteine 910, cysteine 899-cysteine 917, cysteine 919-cysteine 928, cysteine 931-cysteine 945, cysteine 948-cysteine 960, cysteine 950-cysteine 967, cysteine 969-cysteine 979, cysteine 982-cysteine 996, cysteine 999-cysteine 1011, cysteine 1001-cysteine 1018, cysteine 1020-cysteine 1029, and cysteine 1032-cysteine 1047. Asparagine 885 carries N-linked (GlcNAc...) asparagine glycosylation. N-linked (GlcNAc...) asparagine glycosylation is present at asparagine 941. A glycan (N-linked (GlcNAc...) asparagine) is linked at asparagine 1008. 5 consecutive Fibronectin type-III domains span residues 1055-1143 (PPPR…TKPE), 1147-1241 (GHLN…APPQ), 1242-1357 (TQGP…SVPV), 1358-1462 (FMAP…AAPA), and 1463-1566 (QLRP…LQLK). N-linked (GlcNAc...) asparagine glycans are attached at residues asparagine 1068, asparagine 1089, asparagine 1150, asparagine 1171, and asparagine 1222. N-linked (GlcNAc...) asparagine glycans are attached at residues asparagine 1382, asparagine 1473, and asparagine 1626. 2 consecutive Laminin G-like domains span residues 1511-1700 (TKGT…WEGC) and 1705-1882 (EEGV…QDGC). Cysteines 1663 and 1700 form a disulfide. N-linked (GlcNAc...) asparagine glycosylation is present at asparagine 1770. 13 Fibronectin type-III domains span residues 1847 to 1946 (EPGF…TAPQ), 1948 to 2045 (VPTP…TPQE), 2046 to 2132 (APQE…TAQL), 2133 to 2234 (PPEQ…IPEG), 2235 to 2321 (VPAP…APPE), 2322 to 2421 (GVVN…SVEM), 2422 to 2525 (PPGA…DKPG), 2526 to 2613 (PIDA…TLPG), 2617 to 2713 (GIPS…TRPC), 2717 to 2810 (GVQP…THPA), 2811 to 2914 (PPQE…TLAG), 2918 to 3009 (RGAT…MWEE), and 3013 to 3103 (GMLP…TPSD). Cysteine 1853 and cysteine 1882 form a disulfide bridge. An N-linked (GlcNAc...) asparagine glycan is attached at asparagine 1894. The segment at 1931-1955 (VSSDWSRGRTLGTAPQSVPTPSRAQ) is disordered. Positions 1943 to 1955 (TAPQSVPTPSRAQ) are enriched in polar residues. Residues asparagine 1958, asparagine 2095, asparagine 2121, asparagine 2177, asparagine 2186, asparagine 2249, asparagine 2276, asparagine 2313, asparagine 2368, and asparagine 2404 are each glycosylated (N-linked (GlcNAc...) asparagine). N-linked (GlcNAc...) asparagine glycosylation is found at asparagine 2575, asparagine 2647, asparagine 2701, asparagine 2761, and asparagine 2779. N-linked (GlcNAc...) asparagine glycans are attached at residues asparagine 2928, asparagine 2998, asparagine 3023, asparagine 3090, asparagine 3208, asparagine 3322, and asparagine 3411. Fibronectin type-III domains lie at 3395-3489 (CPAT…TRED), 3490-3580 (VPEG…TTQR), 3581-3671 (SPEN…TLQA), 3672-3766 (APQG…TPED), 3769-3857 (PPCN…TLEA), 3858-3955 (APVG…TLEA), 3956-4059 (PPRG…SAPS), 4060-4148 (GLMN…APPD), 4149-4256 (TQMA…APPD), 4257-4346 (GLSP…TPEV), 4347-4437 (PPSE…APPE), 4438-4522 (NMDP…TSPS), 4523-4625 (APSG…VPPL), 4628-4725 (PAPH…TGPA), 4726-4818 (PPEG…THPA), 4819-4921 (PPSG…TKKE), and 4922-5005 (MPQY…YDAA). Asparagine 3589, asparagine 3645, asparagine 3686, asparagine 3712, asparagine 3723, and asparagine 3772 each carry an N-linked (GlcNAc...) asparagine glycan. N-linked (GlcNAc...) asparagine glycosylation is found at asparagine 3976, asparagine 4063, asparagine 4194, asparagine 4218, asparagine 4304, asparagine 4340, asparagine 4365, and asparagine 4410. Asparagine 4556, asparagine 4575, asparagine 4683, asparagine 4716, asparagine 4746, asparagine 4756, asparagine 4765, asparagine 4915, and asparagine 4934 each carry an N-linked (GlcNAc...) asparagine glycan. The helical transmembrane segment at 5034–5054 (FIMVMAVVGLILLAIFLSLIL) threads the bilayer. At 5055-5193 (QRKIHKEPCI…EHTAFTDTHL (139 aa)) the chain is on the cytoplasmic side. Positions 5191-5193 (THL) match the PDZ-binding motif.

In terms of assembly, interacts with collagen IV and fibronectin via its laminin EGF-like domains. Interaction with collagen may be required for stable integration into the basement membrane. Interacts with NINL. Interacts with USH1C. Component of USH2 complex, composed of ADGRV1, PDZD7, USH2A and WHRN. Interacts with ADGRV1/MASS1 (via N-terminal PDZ domain). Interacts (via the cytoplasmic region) with WHRN. Interacts (via the cytoplasmic region) with PDZD7. Interacts (via the cytoplasmic region) with VEZT and MYO7A (via MyTH4-FERM domains); the interaction associates VEZT with the USH2 complex at the stereocilia base. In terms of tissue distribution, present in the testis, epididymis, oviduct, spleen, submaxillary gland, and small and large intestines. Not detected in the brain, skin, lung, skeletal muscle, cardiac muscle, liver or kidney. Expressed in smooth muscle of the colon and the epididymis. Also present in select vascular basement membranes. In the cochlea, it is present in virtually every basement membrane. It is particularly high in the strial capillary basement membranes (SCBMs). In the retina, it is again expressed in all of the basement membranes. It is also very prevalent in the lens capsule and the Bruch's layer between the retinal pigment epithelium and the choroid layer, which is very rich in basement membranes. In neonates in it is widely expressed in the basement membranes of the cochlea. Present in the synaptic terminals of retinal photoreceptors (at protein level).

The protein resides in the cell projection. Its subcellular location is the stereocilium membrane. The protein localises to the photoreceptor inner segment. It is found in the secreted. Its function is as follows. Involved in hearing and vision as member of the USH2 complex. In the inner ear, required for the maintenance of hair bundle ankle formation, which connects growing stereocilia in developing cochlear hair cells. In retina photoreceptors, the USH2 complex is required for the maintenance of periciliary membrane complex that seems to play a role in regulating intracellular protein transport. This is Usherin (Ush2A) from Mus musculus (Mouse).